The primary structure comprises 155 residues: 2-C-methyl-D-erythritol 2,4-cyclodiphosphate synthase (155 aa).

2 residues coordinate a divalent metal cation: Asp8 and His10. Residues 8-10 (DVH) and 34-35 (HS) contribute to the 4-CDP-2-C-methyl-D-erythritol 2-phosphate site. An a divalent metal cation-binding site is contributed by His42. 4-CDP-2-C-methyl-D-erythritol 2-phosphate contacts are provided by residues 56–58 (DIG), 61–65 (FPDSD), 100–106 (AQKPKML), 132–135 (TTEE), Phe139, and Lys142.

Belongs to the IspF family. Homotrimer. A divalent metal cation serves as cofactor.

It carries out the reaction 4-CDP-2-C-methyl-D-erythritol 2-phosphate = 2-C-methyl-D-erythritol 2,4-cyclic diphosphate + CMP. Its pathway is isoprenoid biosynthesis; isopentenyl diphosphate biosynthesis via DXP pathway; isopentenyl diphosphate from 1-deoxy-D-xylulose 5-phosphate: step 4/6. In terms of biological role, involved in the biosynthesis of isopentenyl diphosphate (IPP) and dimethylallyl diphosphate (DMAPP), two major building blocks of isoprenoid compounds. Catalyzes the conversion of 4-diphosphocytidyl-2-C-methyl-D-erythritol 2-phosphate (CDP-ME2P) to 2-C-methyl-D-erythritol 2,4-cyclodiphosphate (ME-CPP) with a corresponding release of cytidine 5-monophosphate (CMP). This is 2-C-methyl-D-erythritol 2,4-cyclodiphosphate synthase from Clostridium botulinum (strain Okra / Type B1).